The chain runs to 131 residues: GATA zinc finger domain-containing protein 2 (131 aa).

Low complexity predominate over residues 21–55 (STATDATSADGAASETDAASATDTTSATDPTSATD). A disordered region spans residues 21 to 85 (STATDATSAD…RGRPYISTPP (65 aa)). Positions 57-74 (IATTNTTGITSSGPTTNG) are enriched in polar residues. Residues 88–115 (CYDCGRTRSPYWRKGTYNGQVVHLCNAC) form a GATA-type zinc finger.

This is GATA zinc finger domain-containing protein 2 (comH) from Dictyostelium discoideum (Social amoeba).